Here is a 301-residue protein sequence, read N- to C-terminus: Cell division control protein 2 homolog 1 (301 aa).

Residues 5–297 (YERLQKIGEG…AAQALEHPYF (293 aa)) enclose the Protein kinase domain. ATP is bound by residues 11-19 (IGEGSYGVV) and Lys34. Ser15 is subject to Phosphoserine. Phosphotyrosine is present on Tyr16. Asp127 acts as the Proton acceptor in catalysis. Position 160 is a phosphothreonine; by CAK (Thr160).

It belongs to the protein kinase superfamily. CMGC Ser/Thr protein kinase family. CDC2/CDKX subfamily. Forms a stable but non-covalent complex with a regulatory subunit and with a cyclin.

It catalyses the reaction L-seryl-[protein] + ATP = O-phospho-L-seryl-[protein] + ADP + H(+). The enzyme catalyses L-threonyl-[protein] + ATP = O-phospho-L-threonyl-[protein] + ADP + H(+). Its activity is regulated as follows. Phosphorylation at Ser-15 or Tyr-16 inactivates the enzyme, while phosphorylation at Thr-160 activates it. Functionally, probably involved in the control of the cell cycle. In Trypanosoma brucei brucei, this protein is Cell division control protein 2 homolog 1 (CRK1).